Reading from the N-terminus, the 178-residue chain is Large ribosomal subunit protein uL5 (178 aa).

Ala2 carries the N-acetylalanine modification. Lys38 is covalently cross-linked (Glycyl lysine isopeptide (Lys-Gly) (interchain with G-Cter in SUMO2)). Phosphothreonine occurs at positions 44 and 47. Lys52 carries the N6-acetyllysine; alternate modification. Lys52 is covalently cross-linked (Glycyl lysine isopeptide (Lys-Gly) (interchain with G-Cter in SUMO2); alternate). The residue at position 85 (Lys85) is an N6-acetyllysine. A Glycyl lysine isopeptide (Lys-Gly) (interchain with G-Cter in SUMO2) cross-link involves residue Lys154.

The protein belongs to the universal ribosomal protein uL5 family. As to quaternary structure, component of the large ribosomal subunit (LSU). Part of the 5S RNP complex, which is a LSU subcomplex composed of the 5S RNA, RPL5 and RPL11. Component of a hexameric 5S RNP precursor complex, composed of 5S RNA, RRS1, RPF2/BXDC1, RPL5, RPL11 and HEATR3; this complex acts as a precursor for ribosome assembly. Interacts with PML. Interacts with MDM2 (via its RanBP2-type zinc finger domain); negatively regulates MDM2-mediated TP53 ubiquitination and degradation. Interacts with NOP53; retains RPL11 into the nucleolus.

The protein resides in the nucleus. Its subcellular location is the nucleolus. It localises to the cytoplasm. Functionally, component of the ribosome, a large ribonucleoprotein complex responsible for the synthesis of proteins in the cell. The small ribosomal subunit (SSU) binds messenger RNAs (mRNAs) and translates the encoded message by selecting cognate aminoacyl-transfer RNA (tRNA) molecules. The large subunit (LSU) contains the ribosomal catalytic site termed the peptidyl transferase center (PTC), which catalyzes the formation of peptide bonds, thereby polymerizing the amino acids delivered by tRNAs into a polypeptide chain. The nascent polypeptides leave the ribosome through a tunnel in the LSU and interact with protein factors that function in enzymatic processing, targeting, and the membrane insertion of nascent chains at the exit of the ribosomal tunnel. As part of the 5S RNP/5S ribonucleoprotein particle it is an essential component of the LSU, required for its formation and the maturation of rRNAs. It also couples ribosome biogenesis to p53/TP53 activation. As part of the 5S RNP it accumulates in the nucleoplasm and inhibits MDM2, when ribosome biogenesis is perturbed, mediating the stabilization and the activation of TP53. Promotes nucleolar location of PML. In Oryctolagus cuniculus (Rabbit), this protein is Large ribosomal subunit protein uL5 (RPL11).